Consider the following 439-residue polypeptide: MGRMCIAMAPRTLLLLIGCQLVFGFNEPINIVSHLNDDWFLFGDSRSDCTYVENNGHPKLDWLDLDPKLCNSGKIAAKSGNSLFRSFHFTDFYNYTGEGDQIIFYEGVSFSPSHGFKCLVEGDNNKWMGNKARFYALLYKKMAQYRSLSFVTVPYAYGGNAKPTSICKDKTLTLNNPTFISKESNYVDYYYVSEANFTLQGCDEFIVPLCVFNGHSRGSSSDPANKYYTDSQSYYNIDTGVLYGFNSTLDVGNTAQNPGLDLTCMYLVLTPGNYKAVSLEYLLTIPSKAICLRKPKRFMPVQVVDSRWNSTRQSDNMTAVACQLPYCFFRNTSADYSGDTHDVHHGDFYFRQLLSGLLYNVSCIAQQGAFLYNNVSSIWPVYGYGHCPTAANIGYMAPVCLYDPLPVILLGVLLGIAVLIIVFLILYFMADSSVRLHEA.

The N-terminal stretch at Met-1 to Val-22 is a signal peptide. Residues Thr-12–Ala-132 are esterase domain 1. Topologically, residues Phe-23–Val-407 are virion surface. The active-site Nucleophile is the Ser-45. A disulfide bridge links Cys-49 with Cys-70. Residue Asn-94 is glycosylated (N-linked (GlcNAc...) asparagine; by host). Cys-118 and Cys-167 are oxidised to a cystine. The segment at Arg-133–Tyr-281 is receptor binding. Residues Asn-196, Asn-246, Asn-309, and Asn-316 are each glycosylated (N-linked (GlcNAc...) asparagine; by host). Cystine bridges form between Cys-202–Cys-291 and Cys-210–Cys-264. Residues Leu-282 to Tyr-395 are esterase domain 2. Cys-322 and Cys-327 are disulfide-bonded. N-linked (GlcNAc...) asparagine; by host glycosylation is present at Asn-331. Active-site charge relay system residues include Asp-342 and His-345. N-linked (GlcNAc...) asparagine; by host glycosylation is found at Asn-360 and Asn-374. Cys-363 and Cys-387 are oxidised to a cystine. Residues Ile-408 to Phe-428 traverse the membrane as a helical segment. Over Met-429–Ala-439 the chain is Intravirion.

It belongs to the influenza type C/coronaviruses hemagglutinin-esterase family. In terms of assembly, homodimer; disulfide-linked. Forms a complex with the M protein in the pre-Golgi. Associates then with S-M complex to form a ternary complex S-M-HE. Post-translationally, N-glycosylated in the host RER.

Its subcellular location is the virion membrane. It localises to the host cell membrane. The enzyme catalyses N-acetyl-9-O-acetylneuraminate + H2O = N-acetylneuraminate + acetate + H(+). The catalysed reaction is N-acetyl-4-O-acetylneuraminate + H2O = N-acetylneuraminate + acetate + H(+). Functionally, structural protein that makes short spikes at the surface of the virus. Contains receptor binding and receptor-destroying activities. Mediates de-O-acetylation of N-acetyl-4-O-acetylneuraminic acid, which is probably the receptor determinant recognized by the virus on the surface of erythrocytes and susceptible cells. This receptor-destroying activity is important for virus release as it probably helps preventing self-aggregation and ensures the efficient spread of the progeny virus from cell to cell. May serve as a secondary viral attachment protein for initiating infection, the spike protein being the major one. May become a target for both the humoral and the cellular branches of the immune system. In Rat coronavirus (strain 681) (RCV-SDAV), this protein is Hemagglutinin-esterase.